The chain runs to 364 residues: Spermatogenesis-associated protein 22 (364 aa).

5 stretches are compositionally biased toward polar residues: residues 1–13 (MKRN…TRST), 30–48 (QPLT…NASD), 73–108 (KTVN…SKSD), 137–169 (LMTN…LPNQ), and 177–189 (QTKS…STMR). Disordered stretches follow at residues 1–51 (MKRN…DNYD) and 70–189 (PLTK…STMR).

Component of a multiprotein complex with MEIOB and RPA2. Interacts with MEIOB. Interacts with the complex BRME1:HSF2BP:BRCA2.

The protein resides in the chromosome. Its function is as follows. Meiosis-specific protein required for homologous recombination in meiosis I. The polypeptide is Spermatogenesis-associated protein 22 (SPATA22) (Bos taurus (Bovine)).